Consider the following 238-residue polypeptide: Opacity protein opA66 (238 aa).

A signal peptide is located at residue Ala-1. 2 disordered regions span residues 88-109 (NLQR…QENG) and 162-183 (GARG…AHQE). Polar residues predominate over residues 168–183 (PTVSSPYKNTQDAHQE).

It belongs to the opacity porin family.

Its subcellular location is the cell outer membrane. Its function is as follows. Implicated in a number of adherence functions. OPA proteins are implicated in pathogenesis and are subject to phase variation. The protein is Opacity protein opA66 of Neisseria gonorrhoeae.